The primary structure comprises 84 residues: Large ribosomal subunit protein uL23 (84 aa).

The protein belongs to the universal ribosomal protein uL23 family. Part of the 50S ribosomal subunit. Contacts protein L29.

Binds to 23S rRNA. One of the proteins that surrounds the polypeptide exit tunnel on the outside of the ribosome. The protein is Large ribosomal subunit protein uL23 of Haloquadratum walsbyi (strain DSM 16790 / HBSQ001).